Here is a 490-residue protein sequence, read N- to C-terminus: Hippocampus abundant transcript 1 protein (490 aa).

Methionine 1 carries the N-acetylmethionine modification. At 1–40 the chain is on the extracellular side; the sequence is MTQGKKKKRAANRSIMLAKKIIIKDGGTPQGIGSPSVYHA. N-linked (GlcNAc...) asparagine glycosylation occurs at asparagine 12. A helical membrane pass occupies residues 41–61; it reads VIVIFLEFFAWGLLTAPTLVV. The Cytoplasmic portion of the chain corresponds to 62–74; that stretch reads LHETFPKHTFLMN. Residues 75–95 form a helical membrane-spanning segment; sequence GLIQGVKGLLSFLSAPLIGAL. Residues 96 to 103 are Extracellular-facing; sequence SDVWGRKS. The helical transmembrane segment at 104–124 threads the bilayer; the sequence is FLLLTVFFTCAPIPLMKISPW. Topologically, residues 125 to 126 are cytoplasmic; it reads WY. Residues 127-147 traverse the membrane as a helical segment; the sequence is FAVISVSGVFAVTFSVVFAYV. At 148-160 the chain is on the extracellular side; that stretch reads ADITQEHERSMAY. A helical transmembrane segment spans residues 161-181; that stretch reads GLVSATFAASLVTSPAIGAYL. The Cytoplasmic segment spans residues 182-188; sequence GRVYGDS. Residues 189–209 form a helical membrane-spanning segment; sequence LVVVLATAIALLDICFILVAV. Residues 210–243 are Extracellular-facing; it reads PESLPEKMRPASWGAPISWEQADPFASLKKVGQD. Residues 244–264 traverse the membrane as a helical segment; the sequence is SIVLLICITVFLSYLPEAGQY. The Cytoplasmic portion of the chain corresponds to 265–284; the sequence is SSFFLYLRQIMKFSPESVAA. A helical membrane pass occupies residues 285–305; sequence FIAVLGILSIIAQTIVLSLLM. Residues 306-313 are Extracellular-facing; sequence RSIGNKNT. The helical transmembrane segment at 314 to 334 threads the bilayer; it reads ILLGLGFQILQLAWYGFGSEP. At 335–337 the chain is on the cytoplasmic side; that stretch reads WMM. The chain crosses the membrane as a helical span at residues 338-358; it reads WAAGAVAAMSSITFPAVSALV. The Extracellular segment spans residues 359–379; that stretch reads SRTADADQQGVVQGMITGIRG. The helical transmembrane segment at 380–400 threads the bilayer; the sequence is LCNGLGPALYGFIFYIFHVEL. The Cytoplasmic portion of the chain corresponds to 401-427; the sequence is KELPITGTDLGTNTSPQHHFEQNSIIP. The chain crosses the membrane as a helical span at residues 428–448; sequence GPPFLFGACSVLLALLVALFI. Over 449–490 the chain is Extracellular; that stretch reads PEHTNLSLRSSSWRKHCGSHSHPHSTQAPGEAKEPLLQDTNV. The N-linked (GlcNAc...) asparagine glycan is linked to asparagine 453. A disordered region spans residues 466–490; the sequence is GSHSHPHSTQAPGEAKEPLLQDTNV.

Belongs to the major facilitator superfamily. In terms of tissue distribution, expressed in various tissues.

It is found in the membrane. This is Hippocampus abundant transcript 1 protein from Mus musculus (Mouse).